Consider the following 269-residue polypeptide: Probable sulfate transport system permease protein cysT (269 aa).

Transmembrane regions (helical) follow at residues 10–30 (SWRI…LALL), 60–80 (MALI…WILV), 92–112 (AAID…LATV), 130–150 (VVFT…PFVV), 179–199 (FWKV…ALAF), 208–228 (SVVI…VLIF), and 240–260 (TVIG…INII). An ABC transmembrane type-1 domain is found at 54–255 (YSITLSMALI…ILSISLFILV (202 aa)).

Belongs to the binding-protein-dependent transport system permease family. CysTW subfamily.

It localises to the plastid. Its subcellular location is the chloroplast membrane. Part of the ABC transporter complex cysAWTP (TC 3.A.1.6.1) involved in sulfate/thiosulfate import. Probably responsible for the translocation of the substrate across the membrane. The chain is Probable sulfate transport system permease protein cysT (cysT) from Mesostigma viride (Green alga).